The chain runs to 395 residues: RNA demethylase ALKBH5 (395 aa).

Disordered stretches follow at residues 1–28 (MAAASGYTDLREKLKSMTSRDNYKAGSR) and 47–83 (AAEPYPASGTTKRKYQEDSDPERSDYEEHQLQKEEEA). A2 is modified (N-acetylalanine). K58 participates in a covalent cross-link: Glycyl lysine isopeptide (Lys-Gly) (interchain with G-Cter in ubiquitin). The segment covering 60–83 (KYQEDSDPERSDYEEHQLQKEEEA) has biased composition (basic and acidic residues). Residues S65 and S70 each carry the phosphoserine modification. Residues 68–117 (ERSDYEEHQLQKEEEARKVKSGIRQIRLFSQDECSKIEARIDEVVSRAEK) are a coiled coil. Residue Y72 is modified to Phosphotyrosine. Residue K87 forms a Glycyl lysine isopeptide (Lys-Gly) (interchain with G-Cter in SUMO1) linkage. S88 is modified (phosphoserine). Residue K133 is modified to N6-acetyllysine. Y140 is an active-site residue. 2-oxoglutarate-binding residues include N194, Y196, and H205. Residues C231 and C268 are joined by a disulfide bond. K236 bears the N6-acetyllysine mark. Positions 267 and 278 each coordinate 2-oxoglutarate. The interval 294 to 395 (ETKSLSSSTL…PTRKVKMRRH (102 aa)) is disordered. Low complexity predominate over residues 296–306 (KSLSSSTLPPS). K322 is covalently cross-linked (Glycyl lysine isopeptide (Lys-Gly) (interchain with G-Cter in SUMO1)). Position 326 is a phosphoserine (S326). K329 participates in a covalent cross-link: Glycyl lysine isopeptide (Lys-Gly) (interchain with G-Cter in SUMO2). The span at 329 to 350 (KADPDAAHRPRILEMDKEENRR) shows a compositional bias: basic and acidic residues. R360 bears the Omega-N-methylarginine mark. 4 positions are modified to phosphoserine: S362, S372, S375, and S385.

This sequence belongs to the alkB family. As to quaternary structure, monomer. Interacts with RBM33; promoting desumoylation by SENP1 and recruitment to N(6)-methyladenosine-containing mRNAs. Interacts (when acetylated by KAT8) with PSPC1; interaction facilitates recognition of N(6)-methyladenosine (m6A) mRNA. Fe(2+) is required as a cofactor. Phosphorylated at Ser-88 and Ser-326 in response to reactive oxygen species (ROS), promoting sumoylation and inactivation. Post-translationally, acetylated by KAT8 at Lys-236, promoting interaction with PSPC1, thereby facilitating recognition of N(6)-methyladenosine (m6A) mRNA by ALKBH5. Deacetylated at Lys-236 by HDAC7. In terms of processing, sumoylated at Lys-87 and Lys-322 by PIAS4 following phosphorylation at Ser-88 and Ser-326 in response to reactive oxygen species (ROS), inhibiting the RNA demethylase activity. Desumoylated by SENP1; relieving RNA demethylase inhibition, leading to N(6)-methyladenosine-containing mRNAs demethylation. Ubiquitinated at Lys-58 via 'Lys-48'-linked polyubiquitin chain, leading to its degradation by the proteasome. Deubiquitinated at Lys-58 by USP9X, promoting its stabilizazion. Widely expressed, with highest expression in testis. In testis, present in almost all testicular cell types except elongating and elongated spermatids (at protein level). Among spermatogenic cells, present at high level in spermatocytes; medium levels in spermatogonia and lower levels in round spermatids (at protein level).

It is found in the nucleus speckle. It catalyses the reaction an N(6)-methyladenosine in mRNA + 2-oxoglutarate + O2 = an adenosine in mRNA + formaldehyde + succinate + CO2. RNA demethylase activity is inhibited following sumoylation. Inhibition is relieved following desumoylation. Inhibited by histone demethylase inhibitor IOX1. Dioxygenase that specifically demethylates N(6)-methyladenosine (m6A) RNA, the most prevalent internal modification of messenger RNA (mRNA) in higher eukaryotes. Demethylates RNA by oxidative demethylation, which requires molecular oxygen, alpha-ketoglutarate and iron. Demethylation of m6A mRNA affects mRNA processing, translation and export. Can also demethylate N(6)-methyladenosine in single-stranded DNA (in vitro). Required for the late meiotic and haploid phases of spermatogenesis by mediating m6A demethylation in spermatocytes and round spermatids: m6A demethylation of target transcripts is required for correct splicing and the production of longer 3'-UTR mRNAs in male germ cells. Involved in paraspeckle assembly, a nuclear membraneless organelle, by undergoing liquid-liquid phase separation. Paraspeckle assembly is coupled with m6A demethylation of RNAs, such as NEAT1 non-coding RNA. Also acts as a negative regulator of T-cell development: inhibits gamma-delta T-cell proliferation via demethylation of JAG1 and NOTCH2 transcripts. Inhibits regulatory T-cell (Treg) recruitment by mediating demethylation and destabilization of CCL28 mRNAs. This Mus musculus (Mouse) protein is RNA demethylase ALKBH5.